The following is a 258-amino-acid chain: Type III pantothenate kinase (258 aa).

6–13 (DVGNTNTV) lines the ATP pocket. Substrate is bound by residues Tyr100 and 107–110 (GADR). Asp109 serves as the catalytic Proton acceptor. Asp129 contributes to the K(+) binding site. Thr132 lines the ATP pocket. Thr184 lines the substrate pocket.

Belongs to the type III pantothenate kinase family. As to quaternary structure, homodimer. NH4(+) is required as a cofactor. It depends on K(+) as a cofactor.

The protein localises to the cytoplasm. It catalyses the reaction (R)-pantothenate + ATP = (R)-4'-phosphopantothenate + ADP + H(+). It participates in cofactor biosynthesis; coenzyme A biosynthesis; CoA from (R)-pantothenate: step 1/5. Functionally, catalyzes the phosphorylation of pantothenate (Pan), the first step in CoA biosynthesis. The chain is Type III pantothenate kinase from Bacillus velezensis (strain DSM 23117 / BGSC 10A6 / LMG 26770 / FZB42) (Bacillus amyloliquefaciens subsp. plantarum).